Consider the following 798-residue polypeptide: Palmitoyl thioesterase CPT1C (798 aa).

The Cytoplasmic portion of the chain corresponds to 1–52 (MAEAHQASSLLSSLSSDGAEVELSSPVWQEIYLCALRSWKRHLWRVWNDFLA). The helical transmembrane segment at 53 to 75 (GVVPATPLSWLFLFSTIQLACLL) threads the bilayer. Residues 76 to 103 (QLDPSLGLMEKIKELLPDWGGQHHQLQG) lie on the Lumenal side of the membrane. A helical membrane pass occupies residues 104-126 (FLSAAVFASCLWGALIFTLHVAL). Over 127–798 (RLLLSHHGWL…PNTPTSSTNL (672 aa)) the chain is Cytoplasmic. His469 serves as the catalytic Proton acceptor. 551-563 (GKSFIKCCHVSSD) serves as a coordination point for CoA. Tyr585, Ser587, and Thr598 together coordinate (R)-carnitine. The tract at residues 759–798 (LFRVGQHFKRQFRGENSDYRYNFLSCKTVDPNTPTSSTNL) is required for interaction with GRIA1.

This sequence belongs to the carnitine/choline acetyltransferase family. In terms of assembly, peripherally associated with AMPAR complex. AMPAR complex consists of an inner core made of 4 pore-forming GluA/GRIA proteins (GRIA1, GRIA2, GRIA3 and GRIA4) and 4 major auxiliary subunits arranged in a twofold symmetry. One of the two pairs of distinct binding sites is occupied either by CNIH2, CNIH3 or CACNG2, CACNG3. The other harbors CACNG2, CACNG3, CACNG4, CACNG8 or GSG1L. This inner core of AMPAR complex is complemented by outer core constituents binding directly to the GluA/GRIA proteins at sites distinct from the interaction sites of the inner core constituents. Outer core constituents include at least PRRT1, PRRT2, CKAMP44/SHISA9, FRRS1L and NRN1. The proteins of the inner and outer core serve as a platform for other, more peripherally associated AMPAR constituents, including CPT1C. Alone or in combination, these auxiliary subunits control the gating and pharmacology of the AMPAR complex and profoundly impact their biogenesis and protein processing. Interacts with SACM1L; the interaction regulates SACM1L phosphatidylinositol-3-phosphatase activity and translocation to endoplasmic reticulum/trans Golgi network in a malonyl-CoA dependent manner. Interacts with ATL1. As to expression, predominantly expressed in brain (at protein level) and testis, highly expressed in the hippocampus, amygdala and cerebellum. Expressed in neurons but not astrocytes. Expressed in the ventral horn from spinal cords.

The protein resides in the synapse. It is found in the cell projection. Its subcellular location is the axon. The protein localises to the dendrite. It localises to the dendritic spine. The protein resides in the endoplasmic reticulum membrane. The catalysed reaction is S-hexadecanoyl-L-cysteinyl-[protein] + H2O = L-cysteinyl-[protein] + hexadecanoate + H(+). Palmitoyl thioesterase specifically expressed in the endoplasmic reticulum of neurons. Modulates the trafficking of the glutamate receptor, AMPAR, to plasma membrane through depalmitoylation of GRIA1. Also regulates AMPR trafficking through the regulation of SACM1L phosphatidylinositol-3-phosphatase activity by interaction in a malonyl-CoA dependent manner. Binds malonyl-CoA and couples malonyl-CoA to ceramide levels, necessary for proper spine maturation and contributing to systemic energy homeostasis and appetite control. Binds to palmitoyl-CoA, but does not have carnitine palmitoyltransferase 1 catalytic activity or at very low levels. In Mus musculus (Mouse), this protein is Palmitoyl thioesterase CPT1C (Cpt1c).